The primary structure comprises 301 residues: Lycopene elongase/hydratase (301 aa).

The tract at residues 1–20 is disordered; it reads MSADMAAQSESGEGGDDGRA. 9 helical membrane passes run 39–59, 61–81, 110–130, 133–153, 160–180, 186–206, 229–249, 252–272, and 276–296; these read FWLY…SALA, LFGL…NVFL, PVNT…FAVA, VAWP…APPF, LLDS…YAAV, PMLA…FSAI, TYWY…AVDL, GALL…GVDV, and YWWY…GALW.

It belongs to the UbiA prenyltransferase family.

It localises to the cell membrane. It carries out the reaction all-trans-lycopene + dimethylallyl diphosphate + H2O = dihydroisopentenyldehydrorhodopin + diphosphate. The enzyme catalyses isopentenyldehydrorhodopin + dimethylallyl diphosphate + H2O = dihydrobisanhydrobacterioruberin + diphosphate. It participates in carotenoid biosynthesis. Involved in the biosynthesis of the acyclic C50 carotenoid bacterioruberin (BR). Acts as a bifunctional elongase/hydratase that catalyzes the elongation of lycopene by attaching a C(5) isoprene unit at C-2, as well as the hydroxylation of the previous end of the molecule. The enzyme acts at both ends of the substrate, and catalyzes the conversion of lycopene to the C(45) intermediate dihydroisopentenyldehydrorhodopin (DH-IDR) and the conversion of isopentenyldehydrorhodopin (IDR) to the C(50) carotenoid dihydrobisanhydrobacterioruberin (DH-BABR). Can also catalyze the conversion of lycopene to tetrahydrobisanhydrobacterioruberin (TH-BABR). This Haloferax volcanii (strain ATCC 29605 / DSM 3757 / JCM 8879 / NBRC 14742 / NCIMB 2012 / VKM B-1768 / DS2) (Halobacterium volcanii) protein is Lycopene elongase/hydratase.